A 275-amino-acid chain; its full sequence is Shikimate dehydrogenase (NADP(+)) (275 aa).

Shikimate-binding positions include 15–17 (SKS) and Thr62. Lys66 functions as the Proton acceptor in the catalytic mechanism. Position 78 (Glu78) interacts with NADP(+). Asn87 and Asp102 together coordinate shikimate. NADP(+)-binding positions include 127–131 (GAGGA), 151–156 (NRTPQK), and Met215. Tyr217 contacts shikimate. Gly239 is a binding site for NADP(+).

Belongs to the shikimate dehydrogenase family. As to quaternary structure, homodimer.

The catalysed reaction is shikimate + NADP(+) = 3-dehydroshikimate + NADPH + H(+). Its pathway is metabolic intermediate biosynthesis; chorismate biosynthesis; chorismate from D-erythrose 4-phosphate and phosphoenolpyruvate: step 4/7. In terms of biological role, involved in the biosynthesis of the chorismate, which leads to the biosynthesis of aromatic amino acids. Catalyzes the reversible NADPH linked reduction of 3-dehydroshikimate (DHSA) to yield shikimate (SA). This chain is Shikimate dehydrogenase (NADP(+)), found in Nitrosospira multiformis (strain ATCC 25196 / NCIMB 11849 / C 71).